We begin with the raw amino-acid sequence, 270 residues long: 4-hydroxy-tetrahydrodipicolinate reductase (270 aa).

NAD(+) is bound by residues Gly11–Met16 and Glu37. NADP(+) is bound at residue Arg38. Residues Gly101–Thr103 and Ala125–Met128 contribute to the NAD(+) site. The Proton donor/acceptor role is filled by His158. Position 159 (His159) interacts with (S)-2,3,4,5-tetrahydrodipicolinate. Catalysis depends on Lys162, which acts as the Proton donor. Gly168–Thr169 serves as a coordination point for (S)-2,3,4,5-tetrahydrodipicolinate.

The protein belongs to the DapB family.

It localises to the cytoplasm. The catalysed reaction is (S)-2,3,4,5-tetrahydrodipicolinate + NAD(+) + H2O = (2S,4S)-4-hydroxy-2,3,4,5-tetrahydrodipicolinate + NADH + H(+). It catalyses the reaction (S)-2,3,4,5-tetrahydrodipicolinate + NADP(+) + H2O = (2S,4S)-4-hydroxy-2,3,4,5-tetrahydrodipicolinate + NADPH + H(+). Its pathway is amino-acid biosynthesis; L-lysine biosynthesis via DAP pathway; (S)-tetrahydrodipicolinate from L-aspartate: step 4/4. Functionally, catalyzes the conversion of 4-hydroxy-tetrahydrodipicolinate (HTPA) to tetrahydrodipicolinate. The protein is 4-hydroxy-tetrahydrodipicolinate reductase of Shewanella baltica (strain OS223).